The chain runs to 1465 residues: DNA polymerase III polC-type (1465 aa).

The Exonuclease domain maps to 427 to 583 (YVVFDVETTG…YDAEATGRLL (157 aa)).

The protein belongs to the DNA polymerase type-C family. PolC subfamily.

The protein resides in the cytoplasm. The catalysed reaction is DNA(n) + a 2'-deoxyribonucleoside 5'-triphosphate = DNA(n+1) + diphosphate. In terms of biological role, required for replicative DNA synthesis. This DNA polymerase also exhibits 3' to 5' exonuclease activity. This chain is DNA polymerase III polC-type, found in Streptococcus pyogenes serotype M3 (strain ATCC BAA-595 / MGAS315).